Consider the following 303-residue polypeptide: Foldase protein PrsA (303 aa).

The signal sequence occupies residues 1-20; that stretch reads MMKKWLLAAASLLMVVTLAG. The N-palmitoyl cysteine moiety is linked to residue cysteine 21. The S-diacylglycerol cysteine moiety is linked to residue cysteine 21. The PpiC domain maps to 137-233; sequence EPKVEVQHIL…YGYHVIRMIK (97 aa).

Belongs to the PrsA family.

Its subcellular location is the cell membrane. It carries out the reaction [protein]-peptidylproline (omega=180) = [protein]-peptidylproline (omega=0). Functionally, plays a major role in protein secretion by helping the post-translocational extracellular folding of several secreted proteins. The sequence is that of Foldase protein PrsA from Latilactobacillus sakei subsp. sakei (strain 23K) (Lactobacillus sakei subsp. sakei).